We begin with the raw amino-acid sequence, 200 residues long: Lipopolysaccharide core heptose(II)-phosphate phosphatase (200 aa).

A signal peptide spans 1-25 (MLAFCRSSLKSKKYFIILLALAAIA).

This sequence belongs to the phosphoglycerate mutase family. Ais subfamily.

The protein localises to the periplasm. The protein operates within bacterial outer membrane biogenesis; lipopolysaccharide metabolism. Catalyzes the dephosphorylation of heptose(II) of the outer membrane lipopolysaccharide core. The polypeptide is Lipopolysaccharide core heptose(II)-phosphate phosphatase (Escherichia coli (strain SE11)).